The following is a 32-amino-acid chain: Photosystem II reaction center protein Z (32 aa).

Residues 9–31 (FILIGSASWAALVLLVGSLNSFV) form a helical membrane-spanning segment.

Belongs to the PsbZ family. In terms of assembly, PSII is composed of 1 copy each of membrane proteins PsbA, PsbB, PsbC, PsbD, PsbE, PsbF, PsbH, PsbI, PsbJ, PsbK, PsbL, PsbM, PsbT, PsbY, PsbZ, Psb30/Ycf12, at least 3 peripheral proteins of the oxygen-evolving complex and a large number of cofactors. It forms dimeric complexes.

The protein resides in the plastid. Its subcellular location is the chloroplast thylakoid membrane. Functionally, may control the interaction of photosystem II (PSII) cores with the light-harvesting antenna, regulates electron flow through the 2 photosystem reaction centers. PSII is a light-driven water plastoquinone oxidoreductase, using light energy to abstract electrons from H(2)O, generating a proton gradient subsequently used for ATP formation. The sequence is that of Photosystem II reaction center protein Z from Euglena viridis (Cercaria viridis).